The primary structure comprises 249 residues: Pyridoxamine 5'-phosphate oxidase family protein ustO (249 aa).

A substrate-binding site is contributed by 21-24 (LFFV). FMN contacts are provided by residues 76 to 81 (ATVMFC), 91 to 92 (RL), arginine 105, and 163 to 164 (RL). Residue 215–217 (ASY) coordinates substrate. The chain crosses the membrane as a helical span at residues 227 to 247 (TGMALMFLVMVVAQWVGYVLY).

This sequence belongs to the pyridoxamine 5'-phosphate oxidase family. FMN is required as a cofactor.

Its subcellular location is the membrane. It functions in the pathway mycotoxin biosynthesis. Functionally, pyridoxamine 5'-phosphate oxidase family protein; part of the gene cluster that mediates the biosynthesis of the secondary metabolite ustiloxin B, an antimitotic tetrapeptide. First, ustA is processed by the subtilisin-like endoprotease Kex2 that is outside the ustiloxin B gene cluster, at the C-terminal side of Arg-Lys, after transfer to Golgi apparatus through the endoplasmic reticulum (ER). Cleavage by KEX2 generates 16 peptides YAIG-I to YAIG-XVI. To process the precursor peptide further, at least two peptidases are necessary to cleave the N-terminal and C-terminal sides of the Tyr-Ala-Ile-Gly core peptide which serves as backbone for the synthesis of ustiloxin B, through cyclization and modification of the tyrosine with a non-protein coding amino acid, norvaline. One of the two peptidases must be the serine peptidase ustP; and the other pepdidase is probably ustH. Macrocyclization of the core peptide derived from ustA requires the tyrosinase ustQ, as well as the homologous oxidases ustYa and ustYb, and leads to the production of the first cyclization product N-desmethylustiloxin F. For the formation of N-desmethylustiloxin F, three oxidation steps are required, hydroxylation at the benzylic position, hydroxylation at either the aromatic ring of Tyr or beta-position of Ile, and oxidative cyclization. UstQ may catalyze the oxidation of a phenol moiety, whereas the ustYa and ustYb are most likely responsible for the remaining two-step oxidations. N-desmethylustiloxin F is then methylated by ustM to yield ustiloxin F which in turn substrate of the cytochrome P450 monooxygenase ustC which catalyzes the formation of S-deoxyustiloxin H. The flavoprotein monooxygenases ustF1 and ustF2 then participate in the modification of the side chain of S-deoxyustiloxin H, leading to the synthesis of an oxime intermediate, via ustiloxin H. Finally, carboxylative dehydration performed by the cysteine desulfurase-like protein ustD yields ustiloxin B. In Aspergillus flavus (strain ATCC 200026 / FGSC A1120 / IAM 13836 / NRRL 3357 / JCM 12722 / SRRC 167), this protein is Pyridoxamine 5'-phosphate oxidase family protein ustO.